Reading from the N-terminus, the 174-residue chain is Adenylosuccinate synthetase (174 aa).

GTP-binding positions include 13-19 (GDEGKGK) and 41-43 (GHT). Residue Asp14 is the Proton acceptor of the active site. Asp14 and Gly41 together coordinate Mg(2+). IMP-binding positions include 14–17 (DEGK), 39–42 (NAGH), Thr130, and Arg144. The Proton donor role is filled by His42.

Belongs to the adenylosuccinate synthetase family. Homodimer. It depends on Mg(2+) as a cofactor.

The protein localises to the cytoplasm. The catalysed reaction is IMP + L-aspartate + GTP = N(6)-(1,2-dicarboxyethyl)-AMP + GDP + phosphate + 2 H(+). It functions in the pathway purine metabolism; AMP biosynthesis via de novo pathway; AMP from IMP: step 1/2. Its function is as follows. Plays an important role in the de novo pathway of purine nucleotide biosynthesis. Catalyzes the first committed step in the biosynthesis of AMP from IMP. This chain is Adenylosuccinate synthetase, found in Stutzerimonas stutzeri (Pseudomonas stutzeri).